Here is a 315-residue protein sequence, read N- to C-terminus: 4-hydroxy-3-methylbut-2-enyl diphosphate reductase (315 aa).

Cys12 is a [4Fe-4S] cluster binding site. The (2E)-4-hydroxy-3-methylbut-2-enyl diphosphate site is built by His41 and His74. Residues His41 and His74 each contribute to the dimethylallyl diphosphate site. Isopentenyl diphosphate is bound by residues His41 and His74. Cys96 provides a ligand contact to [4Fe-4S] cluster. His124 lines the (2E)-4-hydroxy-3-methylbut-2-enyl diphosphate pocket. Residue His124 participates in dimethylallyl diphosphate binding. His124 contacts isopentenyl diphosphate. The active-site Proton donor is Glu126. Thr168 contributes to the (2E)-4-hydroxy-3-methylbut-2-enyl diphosphate binding site. Cys198 lines the [4Fe-4S] cluster pocket. Residues Ser226, Ser227, Asn228, and Ser270 each contribute to the (2E)-4-hydroxy-3-methylbut-2-enyl diphosphate site. Dimethylallyl diphosphate-binding residues include Ser226, Ser227, Asn228, and Ser270. 4 residues coordinate isopentenyl diphosphate: Ser226, Ser227, Asn228, and Ser270.

It belongs to the IspH family. [4Fe-4S] cluster is required as a cofactor.

It catalyses the reaction isopentenyl diphosphate + 2 oxidized [2Fe-2S]-[ferredoxin] + H2O = (2E)-4-hydroxy-3-methylbut-2-enyl diphosphate + 2 reduced [2Fe-2S]-[ferredoxin] + 2 H(+). The enzyme catalyses dimethylallyl diphosphate + 2 oxidized [2Fe-2S]-[ferredoxin] + H2O = (2E)-4-hydroxy-3-methylbut-2-enyl diphosphate + 2 reduced [2Fe-2S]-[ferredoxin] + 2 H(+). It functions in the pathway isoprenoid biosynthesis; dimethylallyl diphosphate biosynthesis; dimethylallyl diphosphate from (2E)-4-hydroxy-3-methylbutenyl diphosphate: step 1/1. The protein operates within isoprenoid biosynthesis; isopentenyl diphosphate biosynthesis via DXP pathway; isopentenyl diphosphate from 1-deoxy-D-xylulose 5-phosphate: step 6/6. Its function is as follows. Catalyzes the conversion of 1-hydroxy-2-methyl-2-(E)-butenyl 4-diphosphate (HMBPP) into a mixture of isopentenyl diphosphate (IPP) and dimethylallyl diphosphate (DMAPP). Acts in the terminal step of the DOXP/MEP pathway for isoprenoid precursor biosynthesis. In Pseudomonas putida (strain W619), this protein is 4-hydroxy-3-methylbut-2-enyl diphosphate reductase.